Reading from the N-terminus, the 172-residue chain is Protein GrpE (172 aa).

The interval 1-24 (MNQDHPEFDSEDLAQNPPETDPLK) is disordered.

It belongs to the GrpE family. As to quaternary structure, homodimer.

Its subcellular location is the cytoplasm. In terms of biological role, participates actively in the response to hyperosmotic and heat shock by preventing the aggregation of stress-denatured proteins, in association with DnaK and GrpE. It is the nucleotide exchange factor for DnaK and may function as a thermosensor. Unfolded proteins bind initially to DnaJ; upon interaction with the DnaJ-bound protein, DnaK hydrolyzes its bound ATP, resulting in the formation of a stable complex. GrpE releases ADP from DnaK; ATP binding to DnaK triggers the release of the substrate protein, thus completing the reaction cycle. Several rounds of ATP-dependent interactions between DnaJ, DnaK and GrpE are required for fully efficient folding. This chain is Protein GrpE, found in Xanthomonas oryzae pv. oryzae (strain PXO99A).